The sequence spans 270 residues: uncharacterized protein (270 aa).

An N-terminal signal peptide occupies residues 1-23; sequence MKKLLIILAATLVLVLGSSGNFR.

This is an uncharacterized protein from Archaeoglobus fulgidus (strain ATCC 49558 / DSM 4304 / JCM 9628 / NBRC 100126 / VC-16).